The following is a 120-amino-acid chain: MEQDINNQTGKKIFLNEECFLELDKLPQHVSVLGVSGFGKSNILLHFLKYAIDNDHPLIFVNGKGDKELITQFEHYQTSAKQLSPEDGFDTVKLVALKNTSAKIWSLDDRIATIKYNPFK.

This is an uncharacterized protein from Mycoplasma pneumoniae (strain ATCC 29342 / M129 / Subtype 1) (Mycoplasmoides pneumoniae).